The primary structure comprises 218 residues: MHTVKLLCVVFSCLCAVAWGSSHVSNRQPCHSPQLTSGTMKVISTGGHDLASGEFNYDSKANKFRFVEDTTHANKTSYMDVLVHFEEGVLYEIDSKNESCKKETLQFRKHLMEIPPDATHESEIYMGSPSITEQGLRVRVWNGKLPELHAHYSLSTTSCGCLPVSGSYYGEKKDLFFSFFGVETEVDDPQVFVPPAYCEGVSFEEAPDDHSFFDLFHD.

A signal peptide spans 1–20 (MHTVKLLCVVFSCLCAVAWG). Asn74 and Asn97 each carry an N-linked (GlcNAc...) asparagine glycan.

It belongs to the ependymin family. As to quaternary structure, forms disulfide-linked dimers. Post-translationally, binds calcium through the terminal sialic acids.

It localises to the secreted. In terms of biological role, may play a role in neural plasticity. May be involved during axon regeneration. The protein is Ependymin (epd) of Devario aequipinnatus (Giant danio).